Consider the following 482-residue polypeptide: tRNA-2-methylthio-N(6)-dimethylallyladenosine synthase (482 aa).

An MTTase N-terminal domain is found at 3 to 120 (KKLHIKTWGC…LPEMIKQVQG (118 aa)). Positions 12, 49, 83, 158, 162, and 165 each coordinate [4Fe-4S] cluster. A Radical SAM core domain is found at 144-376 (KADGPSAFVS…QNRITQMAQQ (233 aa)). Positions 379–442 (RQMFDTEQRI…PNSLRGDLIR (64 aa)) constitute a TRAM domain.

The protein belongs to the methylthiotransferase family. MiaB subfamily. In terms of assembly, monomer. [4Fe-4S] cluster is required as a cofactor.

The protein localises to the cytoplasm. It catalyses the reaction N(6)-dimethylallyladenosine(37) in tRNA + (sulfur carrier)-SH + AH2 + 2 S-adenosyl-L-methionine = 2-methylsulfanyl-N(6)-dimethylallyladenosine(37) in tRNA + (sulfur carrier)-H + 5'-deoxyadenosine + L-methionine + A + S-adenosyl-L-homocysteine + 2 H(+). Its function is as follows. Catalyzes the methylthiolation of N6-(dimethylallyl)adenosine (i(6)A), leading to the formation of 2-methylthio-N6-(dimethylallyl)adenosine (ms(2)i(6)A) at position 37 in tRNAs that read codons beginning with uridine. The protein is tRNA-2-methylthio-N(6)-dimethylallyladenosine synthase of Pseudoalteromonas translucida (strain TAC 125).